A 120-amino-acid polypeptide reads, in one-letter code: uncharacterized protein (120 aa).

Residues 1 to 19 form the signal peptide; that stretch reads MTSFAVVARLITRAPRVRA. 2 disordered regions span residues 48 to 71 and 90 to 120; these read VAKK…DKAK and DTVT…KNLK. Positions 90-103 are enriched in basic and acidic residues; it reads DTVTGKTEETKESI.

This is an uncharacterized protein from Arabidopsis thaliana (Mouse-ear cress).